The following is a 251-amino-acid chain: Hydroxyacylglutathione hydrolase (251 aa).

Zn(2+) is bound by residues H53, H55, D57, H58, H110, D127, and H165.

It belongs to the metallo-beta-lactamase superfamily. Glyoxalase II family. As to quaternary structure, monomer. Zn(2+) serves as cofactor.

It carries out the reaction an S-(2-hydroxyacyl)glutathione + H2O = a 2-hydroxy carboxylate + glutathione + H(+). The protein operates within secondary metabolite metabolism; methylglyoxal degradation; (R)-lactate from methylglyoxal: step 2/2. Functionally, thiolesterase that catalyzes the hydrolysis of S-D-lactoyl-glutathione to form glutathione and D-lactic acid. The sequence is that of Hydroxyacylglutathione hydrolase from Escherichia coli (strain ATCC 8739 / DSM 1576 / NBRC 3972 / NCIMB 8545 / WDCM 00012 / Crooks).